Here is a 210-residue protein sequence, read N- to C-terminus: Ribosomal RNA large subunit methyltransferase E (210 aa).

The S-adenosyl-L-methionine site is built by glycine 64, tryptophan 66, aspartate 84, aspartate 100, and aspartate 125. The active-site Proton acceptor is the lysine 165.

It belongs to the class I-like SAM-binding methyltransferase superfamily. RNA methyltransferase RlmE family.

It localises to the cytoplasm. It catalyses the reaction uridine(2552) in 23S rRNA + S-adenosyl-L-methionine = 2'-O-methyluridine(2552) in 23S rRNA + S-adenosyl-L-homocysteine + H(+). Specifically methylates the uridine in position 2552 of 23S rRNA at the 2'-O position of the ribose in the fully assembled 50S ribosomal subunit. The sequence is that of Ribosomal RNA large subunit methyltransferase E from Chromohalobacter salexigens (strain ATCC BAA-138 / DSM 3043 / CIP 106854 / NCIMB 13768 / 1H11).